The primary structure comprises 253 residues: 5-oxoprolinase subunit A (253 aa).

Belongs to the LamB/PxpA family. As to quaternary structure, forms a complex composed of PxpA, PxpB and PxpC.

The catalysed reaction is 5-oxo-L-proline + ATP + 2 H2O = L-glutamate + ADP + phosphate + H(+). Its function is as follows. Catalyzes the cleavage of 5-oxoproline to form L-glutamate coupled to the hydrolysis of ATP to ADP and inorganic phosphate. The protein is 5-oxoprolinase subunit A of Syntrophobacter fumaroxidans (strain DSM 10017 / MPOB).